The chain runs to 258 residues: UPF0246 protein YaaA (258 aa).

Belongs to the UPF0246 family.

This Shigella boydii serotype 18 (strain CDC 3083-94 / BS512) protein is UPF0246 protein YaaA.